The chain runs to 1257 residues: Period circadian protein homolog 2 (1257 aa).

Residues 1–59 form a disordered region; that stretch reads MNGYVDFSPSPTSPTQEPGEPQPTQAVLQEDVDMSSGSSGNENCSTGRDSQGSDCDDSG. A compositionally biased stretch (low complexity) spans 8–25; it reads SPSPTSPTQEPGEPQPTQ. Residues 35-53 are compositionally biased toward polar residues; it reads SSGSSGNENCSTGRDSQGS. The Nuclear export signal 1 motif lies at 109 to 118; the sequence is LIRTLRELKV. Positions 179 to 246 constitute a PAS 1 domain; sequence ITSEYIVKNS…FHSYTTPYKL (68 aa). The LXXLL motif lies at 306-310; sequence LCCLL. The PAS 2 domain maps to 319–385; it reads YEAPRIPPEK…MLAIHKKILQ (67 aa). Residues 393-436 form the PAC domain; it reads YSPIRFRTRNGEYITLDTSWSSFINPWSRKISFIIGRHKVRVGP. Residues 460–469 carry the Nuclear export signal 2 motif; sequence LTEQIHRLLM. The tract at residues 471-567 is disordered; sequence PVPHSGSSGY…RDSSGASLPK (97 aa). Residues 478-482 are important for protein stability; sequence SGYGS. Composition is skewed to polar residues over residues 493–504 and 518–528; these read MSQTSSSDSNGQ and SGKSQSKSHFS. The interval 510–709 is CSNK1E binding domain; that stretch reads RRSGIFKTSG…DAAGGLSQEK (200 aa). Phosphoserine occurs at positions 525, 528, 531, 538, and 544. Positions 541–555 are enriched in polar residues; it reads EMQSSPPAQVRSVTT. Thr-554 is subject to Phosphothreonine. Residues Ser-659, Ser-693, Ser-697, Ser-706, Ser-758, and Ser-763 each carry the phosphoserine modification. 2 disordered regions span residues 678-706 and 757-833; these read DKKP…GGLS and RSRA…CPSA. The Nuclear localization signal signature appears at 778–794; sequence KKTGKNRKLKSKRVKTR. Residues 779–792 show a composition bias toward basic residues; sequence KTGKNRKLKSKRVK. Positions 821 to 832 are enriched in low complexity; that stretch reads SPSDTSQSSCPS. A Phosphothreonine modification is found at Thr-858. Positions 882–1067 are interaction with PPARG; it reads EFAVQPLPFA…DLCSATGSAL (186 aa). Residue Ser-939 is modified to Phosphoserine. Thr-964 carries the phosphothreonine modification. The residue at position 971 (Ser-971) is a Phosphoserine. Positions 983–990 match the Nuclear export signal 3 motif; the sequence is LQLNLLQL. A disordered region spans residues 993–1044; sequence APESSTGAAGTLGTTGTAASGLDCTSGASRDRQPKAPPTCSEPSDTQNSDAI. Positions 996–1014 are enriched in low complexity; that stretch reads SSTGAAGTLGTTGTAASGL. A compositionally biased stretch (polar residues) spans 1033-1044; it reads SEPSDTQNSDAI. The short motif at 1051-1055 is the LXXLL element; sequence LNLLL. The segment covering 1070 to 1089 has biased composition (low complexity); that stretch reads SGASATSDSLGSSSLGCDTS. The segment at 1070-1108 is disordered; the sequence is SGASATSDSLGSSSLGCDTSRSGAGSSDTSHTSKYFGSI. Positions 1090–1108 are enriched in polar residues; that stretch reads RSGAGSSDTSHTSKYFGSI. Ser-1126 is modified (phosphoserine). The segment at 1157-1257 is CRY binding domain; sequence SRDLQAVLKE…LANPRKEAQT (101 aa). The interval 1226-1257 is disordered; sequence EEDSPSLGLCDTSEAKEEESGQLANPRKEAQT.

Homodimer. Component of the circadian core oscillator, which includes the CRY proteins, CLOCK or NPAS2, BMAL1 or BMAL2, CSNK1D and/or CSNK1E, TIMELESS, and the PER proteins. Interacts with CLOCK-BMAL1 (off DNA). Interacts directly with PER1 and PER3, and through a C-terminal domain, with CRY1 and CRY2. Interacts (via PAS 2 domain) with TIMELESS. Interacts with NFIL3. Different large complexes have been identified with different repressive functions. The core of PER complexes is composed of at least PER1, PER2, PER3, CRY1, CRY2, CSNK1D and/or CSNK1E. The large PER complex involved in the repression of transcriptional termination is composed of at least PER2, CDK9, DDX5, DHX9, NCBP1 and POLR2A (active). The large PER complex involved in the histone deacetylation is composed of at least HDAC1, PER2, SFPQ and SIN3A. The large PER complex involved in the histone methylation is composed of at least PER2, CBX3, TRIM28, SUV39H1 and/or SUV39H2; CBX3 mediates the formation of the complex. Interacts with SETX; the interaction inhibits termination of circadian target genes. Interacts with the nuclear receptors HNF4A, NR1D1, NR4A2, RORA, PPARA, PPARG and THRA; the interaction with at least PPARG is ligand dependent. Interacts with PML. Interacts (phosphorylated) with BTRC and FBXW11; the interactions trigger proteasomal degradation. Interacts with NONO and SFPQ. Interacts with CAVIN3. Interacts with MAGEL2. Interacts with MAP1LC3B. Interacts with HNF4A. Acetylated. Deacetylated by SIRT1, resulting in decreased protein stability. Deacetylated by SIRT6, preventing its degradation by the proteasome, resulting in increased protein stability. Post-translationally, phosphorylated by CSNK1E and CSNK1D. Phosphorylation results in PER2 protein degradation. May be dephosphorylated by PP1. In terms of processing, ubiquitinated, leading to its proteasomal degradation. Ubiquitination may be inhibited by CRY1. In terms of tissue distribution, expressed in all tissues examined including eye, brain, heart, lung, spleen, liver, pancreas and kidney. In the CNS, highly expressed in the SCN, internal granular layer of granular cells of the olfactory bulb, tuberculum olfactorium, piriform cortex, gyrus dentatus of the hippocampus, cerebellum, pars tuberalis/median eminence, and pituitary, and moderately in the tenia tecta, caudate putamen, accumbens nucleus, superior and inferior colliculus and pineal gland.

Its subcellular location is the nucleus. The protein localises to the cytoplasm. It is found in the perinuclear region. In terms of biological role, transcriptional repressor which forms a core component of the circadian clock. The circadian clock, an internal time-keeping system, regulates various physiological processes through the generation of approximately 24 hour circadian rhythms in gene expression, which are translated into rhythms in metabolism and behavior. It is derived from the Latin roots 'circa' (about) and 'diem' (day) and acts as an important regulator of a wide array of physiological functions including metabolism, sleep, body temperature, blood pressure, endocrine, immune, cardiovascular, and renal function. Consists of two major components: the central clock, residing in the suprachiasmatic nucleus (SCN) of the brain, and the peripheral clocks that are present in nearly every tissue and organ system. Both the central and peripheral clocks can be reset by environmental cues, also known as Zeitgebers (German for 'timegivers'). The predominant Zeitgeber for the central clock is light, which is sensed by retina and signals directly to the SCN. The central clock entrains the peripheral clocks through neuronal and hormonal signals, body temperature and feeding-related cues, aligning all clocks with the external light/dark cycle. Circadian rhythms allow an organism to achieve temporal homeostasis with its environment at the molecular level by regulating gene expression to create a peak of protein expression once every 24 hours to control when a particular physiological process is most active with respect to the solar day. Transcription and translation of core clock components (CLOCK, NPAS2, BMAL1, BMAL2, PER1, PER2, PER3, CRY1 and CRY2) plays a critical role in rhythm generation, whereas delays imposed by post-translational modifications (PTMs) are important for determining the period (tau) of the rhythms (tau refers to the period of a rhythm and is the length, in time, of one complete cycle). A diurnal rhythm is synchronized with the day/night cycle, while the ultradian and infradian rhythms have a period shorter and longer than 24 hours, respectively. Disruptions in the circadian rhythms contribute to the pathology of cardiovascular diseases, cancer, metabolic syndrome and aging. A transcription/translation feedback loop (TTFL) forms the core of the molecular circadian clock mechanism. Transcription factors, CLOCK or NPAS2 and BMAL1 or BMAL2, form the positive limb of the feedback loop, act in the form of a heterodimer and activate the transcription of core clock genes and clock-controlled genes (involved in key metabolic processes), harboring E-box elements (5'-CACGTG-3') within their promoters. The core clock genes: PER1/2/3 and CRY1/2 which are transcriptional repressors form the negative limb of the feedback loop and interact with the CLOCK|NPAS2-BMAL1|BMAL2 heterodimer inhibiting its activity and thereby negatively regulating their own expression. This heterodimer also activates nuclear receptors NR1D1/2 and RORA/B/G, which form a second feedback loop and which activate and repress BMAL1 transcription, respectively. PER1 and PER2 proteins transport CRY1 and CRY2 into the nucleus with appropriate circadian timing, but also contribute directly to repression of clock-controlled target genes through interaction with several classes of RNA-binding proteins, helicases and others transcriptional repressors. PER appears to regulate circadian control of transcription by at least three different modes. First, interacts directly with the CLOCK-BMAL1 at the tail end of the nascent transcript peak to recruit complexes containing the SIN3-HDAC that remodel chromatin to repress transcription. Second, brings H3K9 methyltransferases such as SUV39H1 and SUV39H2 to the E-box elements of the circadian target genes, like PER2 itself or PER1. The recruitment of each repressive modifier to the DNA seems to be very precisely temporally orchestrated by the large PER complex, the deacetylases acting before than the methyltransferases. Additionally, large PER complexes are also recruited to the target genes 3' termination site through interactions with RNA-binding proteins and helicases that may play a role in transcription termination to regulate transcription independently of CLOCK-BMAL1 interactions. Recruitment of large PER complexes to the elongating polymerase at PER and CRY termination sites inhibited SETX action, impeding RNA polymerase II release and thereby repressing transcriptional reinitiation. May propagate clock information to metabolic pathways via the interaction with nuclear receptors. Coactivator of PPARA and corepressor of NR1D1, binds rhythmically at the promoter of nuclear receptors target genes like BMAL1 or G6PC1. Directly and specifically represses PPARG proadipogenic activity by blocking PPARG recruitment to target promoters and thereby transcriptional activation. Required for fatty acid and lipid metabolism, is involved as well in the regulation of circulating insulin levels. Plays an important role in the maintenance of cardiovascular functions through the regulation of NO and vasodilatatory prostaglandins production in aortas. Controls circadian glutamate uptake in synaptic vesicles through the regulation of VGLUT1 expression. May also be involved in the regulation of inflammatory processes. Represses the CLOCK-BMAL1 induced transcription of BHLHE40/DEC1 and ATF4. Negatively regulates the formation of the TIMELESS-CRY1 complex by competing with TIMELESS for binding to CRY1. This is Period circadian protein homolog 2 from Rattus norvegicus (Rat).